The following is a 454-amino-acid chain: Rhizobactin siderophore biosynthesis protein RhbE (454 aa).

7 to 13 is a binding site for FAD; it reads AGIGIGP.

The protein belongs to the lysine N(6)-hydroxylase/L-ornithine N(5)-oxygenase family. FAD serves as cofactor.

It participates in siderophore biosynthesis; rhizobactin biosynthesis. This chain is Rhizobactin siderophore biosynthesis protein RhbE (rhbE), found in Rhizobium meliloti (strain 1021) (Ensifer meliloti).